Reading from the N-terminus, the 397-residue chain is S-adenosylmethionine synthase (397 aa).

ATP is bound at residue histidine 17. Aspartate 19 provides a ligand contact to Mg(2+). Glutamate 45 contributes to the K(+) binding site. The L-methionine site is built by glutamate 58 and glutamine 101. The interval 101–111 is flexible loop; sequence QSPDIAQGVDK. Residues 176–178, 243–244, aspartate 252, 258–259, and lysine 279 contribute to the ATP site; these read DGK, RF, and RK. Aspartate 252 contributes to the L-methionine binding site. Residue lysine 283 coordinates L-methionine.

Belongs to the AdoMet synthase family. In terms of assembly, homotetramer; dimer of dimers. Requires Mg(2+) as cofactor. The cofactor is K(+).

Its subcellular location is the cytoplasm. The catalysed reaction is L-methionine + ATP + H2O = S-adenosyl-L-methionine + phosphate + diphosphate. Its pathway is amino-acid biosynthesis; S-adenosyl-L-methionine biosynthesis; S-adenosyl-L-methionine from L-methionine: step 1/1. Functionally, catalyzes the formation of S-adenosylmethionine (AdoMet) from methionine and ATP. The overall synthetic reaction is composed of two sequential steps, AdoMet formation and the subsequent tripolyphosphate hydrolysis which occurs prior to release of AdoMet from the enzyme. The polypeptide is S-adenosylmethionine synthase (Staphylococcus aureus).